The following is a 346-amino-acid chain: Cyclin-dependent kinase 20 (346 aa).

Residues 4–288 form the Protein kinase domain; it reads YCILGRIGEG…ASQALLHQYF (285 aa). Residues 10–18 and K33 contribute to the ATP site; that span reads IGEGAHGIV. The active-site Proton acceptor is D127. Positions 298–324 are disordered; it reads SELPIPQRPGGPAPKAHPGPPHVHDFH. Over residues 303–318 the composition is skewed to pro residues; sequence PQRPGGPAPKAHPGPP.

It belongs to the protein kinase superfamily. CMGC Ser/Thr protein kinase family. CDC2/CDKX subfamily. Monomer. Interacts with MAK. Interacts with TBC1D32.

The protein resides in the nucleus. The protein localises to the cytoplasm. It is found in the cell projection. It localises to the cilium. The catalysed reaction is L-seryl-[protein] + ATP = O-phospho-L-seryl-[protein] + ADP + H(+). It catalyses the reaction L-threonyl-[protein] + ATP = O-phospho-L-threonyl-[protein] + ADP + H(+). Functionally, involved in cell growth. Activates CDK2, a kinase involved in the control of the cell cycle, by phosphorylating residue 'Thr-160'. Required for high-level Shh responses in the developing neural tube. Together with TBC1D32, controls the structure of the primary cilium by coordinating assembly of the ciliary membrane and axoneme, allowing GLI2 to be properly activated in response to SHH signaling. In Mus musculus (Mouse), this protein is Cyclin-dependent kinase 20 (Cdk20).